The primary structure comprises 157 residues: Transcription elongation factor GreB (157 aa).

Residues 52-73 are a coiled coil; sequence KKLLREIDRRVRYLRKRLEDMR.

It belongs to the GreA/GreB family. GreB subfamily.

Its function is as follows. Necessary for efficient RNA polymerase transcription elongation past template-encoded arresting sites. The arresting sites in DNA have the property of trapping a certain fraction of elongating RNA polymerases that pass through, resulting in locked ternary complexes. Cleavage of the nascent transcript by cleavage factors such as GreA or GreB allows the resumption of elongation from the new 3'terminus. GreB releases sequences of up to 9 nucleotides in length. The protein is Transcription elongation factor GreB of Pseudomonas syringae pv. tomato (strain ATCC BAA-871 / DC3000).